We begin with the raw amino-acid sequence, 335 residues long: N-acetyl-gamma-glutamyl-phosphate reductase (335 aa).

Residue cysteine 156 is part of the active site.

The protein belongs to the NAGSA dehydrogenase family. Type 1 subfamily.

The protein resides in the cytoplasm. The catalysed reaction is N-acetyl-L-glutamate 5-semialdehyde + phosphate + NADP(+) = N-acetyl-L-glutamyl 5-phosphate + NADPH + H(+). Its pathway is amino-acid biosynthesis; L-arginine biosynthesis; N(2)-acetyl-L-ornithine from L-glutamate: step 3/4. Catalyzes the NADPH-dependent reduction of N-acetyl-5-glutamyl phosphate to yield N-acetyl-L-glutamate 5-semialdehyde. This chain is N-acetyl-gamma-glutamyl-phosphate reductase, found in Aeromonas salmonicida (strain A449).